Consider the following 1603-residue polypeptide: Pentafunctional AROM polypeptide (1603 aa).

The segment at 1-384 is 3-dehydroquinate synthase; sequence MGVPTKISIL…YEPRASTVSN (384 aa). Residues 44–46, 81–84, 114–116, and Asp119 contribute to the NAD(+) site; these read DTN, ESSK, and GGV. Arg130 provides a ligand contact to 7-phospho-2-dehydro-3-deoxy-D-arabino-heptonate. Position 139-140 (139-140) interacts with NAD(+); it reads TT. 7-phospho-2-dehydro-3-deoxy-D-arabino-heptonate-binding residues include Asp146 and Lys152. Lys161 lines the NAD(+) pocket. Residue Asn162 coordinates 7-phospho-2-dehydro-3-deoxy-D-arabino-heptonate. NAD(+) is bound by residues 179–182 and Asn190; that span reads FLNT. Glu194 contacts Zn(2+). 7-phospho-2-dehydro-3-deoxy-D-arabino-heptonate contacts are provided by residues 194-197 and Lys250; that span reads EVIK. The Proton acceptor; for 3-dehydroquinate synthase activity role is filled by Glu260. 7-phospho-2-dehydro-3-deoxy-D-arabino-heptonate is bound by residues 264 to 268 and His271; that span reads RNLLN. A Zn(2+)-binding site is contributed by His271. His275 acts as the Proton acceptor; for 3-dehydroquinate synthase activity in catalysis. His287 and Lys356 together coordinate 7-phospho-2-dehydro-3-deoxy-D-arabino-heptonate. His287 is a Zn(2+) binding site. The EPSP synthase stretch occupies residues 397-842; that stretch reads VYPGFPKSLN…WNTLAQTFKV (446 aa). Cys824 serves as the catalytic For EPSP synthase activity. Residues 872–1064 are shikimate kinase; it reads AASIFIIGMR…RRKENTFFVS (193 aa). 879-886 lines the ATP pocket; it reads GMRGAGKT. Residues 1065–1285 are 3-dehydroquinase; the sequence is LTFPDLTPAS…AAPGQLSARE (221 aa). His1188 serves as the catalytic Proton acceptor; for 3-dehydroquinate dehydratase activity. Catalysis depends on Lys1216, which acts as the Schiff-base intermediate with substrate; for 3-dehydroquinate dehydratase activity. The tract at residues 1298-1603 is shikimate dehydrogenase; the sequence is AKKFAVIGKP…GVSSSDDTIS (306 aa).

In the N-terminal section; belongs to the sugar phosphate cyclases superfamily. Dehydroquinate synthase family. It in the 2nd section; belongs to the EPSP synthase family. The protein in the 3rd section; belongs to the shikimate kinase family. This sequence in the 4th section; belongs to the type-I 3-dehydroquinase family. In the C-terminal section; belongs to the shikimate dehydrogenase family. As to quaternary structure, homodimer. It depends on Zn(2+) as a cofactor.

Its subcellular location is the cytoplasm. It carries out the reaction 7-phospho-2-dehydro-3-deoxy-D-arabino-heptonate = 3-dehydroquinate + phosphate. It catalyses the reaction 3-dehydroquinate = 3-dehydroshikimate + H2O. The catalysed reaction is shikimate + NADP(+) = 3-dehydroshikimate + NADPH + H(+). The enzyme catalyses shikimate + ATP = 3-phosphoshikimate + ADP + H(+). It carries out the reaction 3-phosphoshikimate + phosphoenolpyruvate = 5-O-(1-carboxyvinyl)-3-phosphoshikimate + phosphate. It participates in metabolic intermediate biosynthesis; chorismate biosynthesis; chorismate from D-erythrose 4-phosphate and phosphoenolpyruvate: step 2/7. The protein operates within metabolic intermediate biosynthesis; chorismate biosynthesis; chorismate from D-erythrose 4-phosphate and phosphoenolpyruvate: step 3/7. It functions in the pathway metabolic intermediate biosynthesis; chorismate biosynthesis; chorismate from D-erythrose 4-phosphate and phosphoenolpyruvate: step 4/7. Its pathway is metabolic intermediate biosynthesis; chorismate biosynthesis; chorismate from D-erythrose 4-phosphate and phosphoenolpyruvate: step 5/7. It participates in metabolic intermediate biosynthesis; chorismate biosynthesis; chorismate from D-erythrose 4-phosphate and phosphoenolpyruvate: step 6/7. In terms of biological role, the AROM polypeptide catalyzes 5 consecutive enzymatic reactions in prechorismate polyaromatic amino acid biosynthesis. In Paracoccidioides brasiliensis (strain Pb03), this protein is Pentafunctional AROM polypeptide.